The chain runs to 88 residues: Cell division topological specificity factor (88 aa).

It belongs to the MinE family.

Prevents the cell division inhibition by proteins MinC and MinD at internal division sites while permitting inhibition at polar sites. This ensures cell division at the proper site by restricting the formation of a division septum at the midpoint of the long axis of the cell. The protein is Cell division topological specificity factor of Clostridium kluyveri (strain ATCC 8527 / DSM 555 / NBRC 12016 / NCIMB 10680 / K1).